The following is a 175-amino-acid chain: MSKQDEVIVVGKFGASYGIRGWLKVVSFTDQPESIFDYKPWLIQVKGEWVEFSVESWKRHKGLVCKLKGLDVREEAQTYTNLEIAVKADALPELSEDEFYWRELFGMEVVTTKGYALGVVDDIFETGSNDVLVVKANLKDAFGKKERLIPFIDEQVIKLIDREAQRIEVDWDPGF.

The 80-residue stretch at 96 to 175 (EDEFYWRELF…RIEVDWDPGF (80 aa)) folds into the PRC barrel domain.

The protein belongs to the RimM family. In terms of assembly, binds ribosomal protein uS19.

It is found in the cytoplasm. Its function is as follows. An accessory protein needed during the final step in the assembly of 30S ribosomal subunit, possibly for assembly of the head region. Essential for efficient processing of 16S rRNA. May be needed both before and after RbfA during the maturation of 16S rRNA. It has affinity for free ribosomal 30S subunits but not for 70S ribosomes. This Aliivibrio fischeri (strain ATCC 700601 / ES114) (Vibrio fischeri) protein is Ribosome maturation factor RimM.